The primary structure comprises 444 residues: Homogentisate 1,2-dioxygenase (444 aa).

The tract at residues 92-111 (GDSADVPPTPPNQLRWDPLP) is disordered. The Proton acceptor role is filled by His298. 2 residues coordinate Fe cation: His341 and Glu347. 2 residues coordinate homogentisate: Tyr356 and His377. Fe cation is bound at residue His377.

This sequence belongs to the homogentisate dioxygenase family. In terms of assembly, hexamer; dimer of trimers. Fe cation serves as cofactor.

It catalyses the reaction homogentisate + O2 = 4-maleylacetoacetate + H(+). Its pathway is amino-acid degradation; L-phenylalanine degradation; acetoacetate and fumarate from L-phenylalanine: step 4/6. Functionally, involved in the catabolism of homogentisate (2,5-dihydroxyphenylacetate or 2,5-OH-PhAc), a central intermediate in the degradation of phenylalanine and tyrosine. Catalyzes the oxidative ring cleavage of the aromatic ring of homogentisate to yield maleylacetoacetate. In Burkholderia vietnamiensis (strain G4 / LMG 22486) (Burkholderia cepacia (strain R1808)), this protein is Homogentisate 1,2-dioxygenase.